The following is a 94-amino-acid chain: MLKPLGDRVILQQQEEEEQTIGGIVIANNAKEKPQSGKVVAVNDGRVLDNGTKVDPSVKVGDQVLFDKYAGTEVKYQGAKYLVLHEKDIVAIED.

This sequence belongs to the GroES chaperonin family. In terms of assembly, heptamer of 7 subunits arranged in a ring. Interacts with the chaperonin GroEL.

Its subcellular location is the cytoplasm. Together with the chaperonin GroEL, plays an essential role in assisting protein folding. The GroEL-GroES system forms a nano-cage that allows encapsulation of the non-native substrate proteins and provides a physical environment optimized to promote and accelerate protein folding. GroES binds to the apical surface of the GroEL ring, thereby capping the opening of the GroEL channel. The sequence is that of Co-chaperonin GroES from Lactiplantibacillus plantarum (strain ATCC BAA-793 / NCIMB 8826 / WCFS1) (Lactobacillus plantarum).